Consider the following 73-residue polypeptide: Putative membrane protein insertion efficiency factor (73 aa).

The protein belongs to the UPF0161 family.

The protein localises to the cell inner membrane. Could be involved in insertion of integral membrane proteins into the membrane. The polypeptide is Putative membrane protein insertion efficiency factor (Dinoroseobacter shibae (strain DSM 16493 / NCIMB 14021 / DFL 12)).